A 350-amino-acid polypeptide reads, in one-letter code: Protein pelota homolog (350 aa).

Belongs to the eukaryotic release factor 1 family. Pelota subfamily. Monomer. The cofactor is a divalent metal cation.

Its subcellular location is the cytoplasm. May function in recognizing stalled ribosomes, interact with stem-loop structures in stalled mRNA molecules, and effect endonucleolytic cleavage of the mRNA. May play a role in the release non-functional ribosomes and degradation of damaged mRNAs. Has endoribonuclease activity. The protein is Protein pelota homolog of Methanosarcina acetivorans (strain ATCC 35395 / DSM 2834 / JCM 12185 / C2A).